A 957-amino-acid chain; its full sequence is SLIT and NTRK-like protein 5 (957 aa).

A signal peptide spans M1–T40. The Extracellular segment spans residues I41–S664. LRR repeat units lie at residues P82–N103, G106–G127, G130–G151, N154–K175, M178–F199, and P201–Q222. The N-linked (GlcNAc...) asparagine glycan is linked to N103. The 52-residue stretch at N235–R286 folds into the LRRCT 1 domain. Positions A317–Y358 are disordered. Residues Q365–K407 form the LRRNT domain. LRR repeat units lie at residues N410 to E431, G434 to D455, N458 to G479, S482 to P503, N506 to G527, and T529 to D550. The LRRCT 2 domain occupies N563–D614. Residues P623–S632 show a composition bias toward low complexity. The disordered stretch occupies residues P623 to R642. An N-linked (GlcNAc...) asparagine glycan is attached at N644. Residues V665–F685 form a helical membrane-spanning segment. The Cytoplasmic portion of the chain corresponds to V686 to F957. The disordered stretch occupies residues S789–L844. Residues Q796 to Q811 are compositionally biased toward pro residues.

It belongs to the SLITRK family. In terms of tissue distribution, in the adult, significant expression is detected only in the brain. In the embryo, expressed in the subventricular zone, cortical plate, pyramidal layer of hippocampus, thalamus and hypothalamus.

It is found in the membrane. Its function is as follows. Suppresses neurite outgrowth. The protein is SLIT and NTRK-like protein 5 (Slitrk5) of Mus musculus (Mouse).